The chain runs to 185 residues: Peptidyl-tRNA hydrolase (185 aa).

Tyrosine 14 provides a ligand contact to tRNA. Catalysis depends on histidine 19, which acts as the Proton acceptor. The tRNA site is built by tyrosine 65, asparagine 67, and asparagine 113.

It belongs to the PTH family. In terms of assembly, monomer.

It is found in the cytoplasm. It catalyses the reaction an N-acyl-L-alpha-aminoacyl-tRNA + H2O = an N-acyl-L-amino acid + a tRNA + H(+). Functionally, hydrolyzes ribosome-free peptidyl-tRNAs (with 1 or more amino acids incorporated), which drop off the ribosome during protein synthesis, or as a result of ribosome stalling. In terms of biological role, catalyzes the release of premature peptidyl moieties from peptidyl-tRNA molecules trapped in stalled 50S ribosomal subunits, and thus maintains levels of free tRNAs and 50S ribosomes. This is Peptidyl-tRNA hydrolase from Rickettsia typhi (strain ATCC VR-144 / Wilmington).